A 135-amino-acid polypeptide reads, in one-letter code: RxLR effector protein Avr10 (135 aa).

Residues Met-1 to Ala-19 form the signal peptide. Positions Gly-34–Lys-43 are enriched in polar residues. The tract at residues Gly-34–Ala-64 is disordered. The RxLR-dEER signature appears at Arg-44–Arg-63. Positions Leu-46–Ala-55 are enriched in basic and acidic residues.

The protein belongs to the RxLR effector family.

The protein localises to the secreted. It is found in the host nucleus. Its subcellular location is the host cytoplasm. Functionally, secreted effector that acts as an elicitor of hypersensitive response (HR) specifically on plants carrying defense protein R10. Enhances P.infestans colonization of Nicotiana benthamiana leaves. In Phytophthora infestans (strain T30-4) (Potato late blight agent), this protein is RxLR effector protein Avr10.